Reading from the N-terminus, the 82-residue chain is Small ribosomal subunit protein bS18 (82 aa).

The disordered stretch occupies residues 1–20 (MVDINQIPTRRPFHRRRKTC).

The protein belongs to the bacterial ribosomal protein bS18 family. Part of the 30S ribosomal subunit. Forms a tight heterodimer with protein bS6.

In terms of biological role, binds as a heterodimer with protein bS6 to the central domain of the 16S rRNA, where it helps stabilize the platform of the 30S subunit. The chain is Small ribosomal subunit protein bS18 from Chelativorans sp. (strain BNC1).